The sequence spans 318 residues: Methionyl-tRNA formyltransferase (318 aa).

112–115 contributes to the (6S)-5,6,7,8-tetrahydrofolate binding site; that stretch reads SILP.

Belongs to the Fmt family.

The catalysed reaction is L-methionyl-tRNA(fMet) + (6R)-10-formyltetrahydrofolate = N-formyl-L-methionyl-tRNA(fMet) + (6S)-5,6,7,8-tetrahydrofolate + H(+). Its function is as follows. Attaches a formyl group to the free amino group of methionyl-tRNA(fMet). The formyl group appears to play a dual role in the initiator identity of N-formylmethionyl-tRNA by promoting its recognition by IF2 and preventing the misappropriation of this tRNA by the elongation apparatus. The polypeptide is Methionyl-tRNA formyltransferase (Haemophilus influenzae (strain ATCC 51907 / DSM 11121 / KW20 / Rd)).